We begin with the raw amino-acid sequence, 233 residues long: Large ribosomal subunit protein uL1 (233 aa).

The protein belongs to the universal ribosomal protein uL1 family. Part of the 50S ribosomal subunit.

Binds directly to 23S rRNA. The L1 stalk is quite mobile in the ribosome, and is involved in E site tRNA release. Functionally, protein L1 is also a translational repressor protein, it controls the translation of the L11 operon by binding to its mRNA. This Rhodospirillum rubrum (strain ATCC 11170 / ATH 1.1.1 / DSM 467 / LMG 4362 / NCIMB 8255 / S1) protein is Large ribosomal subunit protein uL1.